Here is a 219-residue protein sequence, read N- to C-terminus: Peroxiredoxin-5, mitochondrial (219 aa).

The N-terminal 57 residues, methionine 1–alanine 57, are a transit peptide targeting the mitochondrion. Residues isoleucine 61–leucine 219 form the Thioredoxin domain. Lysine 80 is modified (N6-acetyllysine). N6-acetyllysine; alternate is present on lysine 88. Lysine 88 carries the post-translational modification N6-succinyllysine; alternate. The active-site Cysteine sulfenic acid (-SOH) intermediate is the cysteine 105. The S-palmitoyl cysteine moiety is linked to residue cysteine 105. Cysteine 105 and cysteine 209 are joined by a disulfide. Lysine 121 carries the post-translational modification N6-succinyllysine. Serine 187 carries the post-translational modification Phosphoserine. A Microbody targeting signal motif is present at residues serine 217 to leucine 219.

The protein belongs to the peroxiredoxin family. Prx5 subfamily. Monomer. Post-translationally, S-palmitoylated. Palmitoylation occurs on the active site, inhibiting its reactivity; therefore PRDX5 palmitoylation status determines its antioxidant capacity. In terms of processing, S-palmitoylated. Depalmitoylated by ABHD10.

The protein resides in the mitochondrion. The protein localises to the cytoplasm. It localises to the peroxisome matrix. The catalysed reaction is a hydroperoxide + [thioredoxin]-dithiol = an alcohol + [thioredoxin]-disulfide + H2O. Functionally, thiol-specific peroxidase that catalyzes the reduction of hydrogen peroxide and organic hydroperoxides to water and alcohols, respectively. Plays a role in cell protection against oxidative stress by detoxifying peroxides and as sensor of hydrogen peroxide-mediated signaling events. The chain is Peroxiredoxin-5, mitochondrial (PRDX5) from Bos taurus (Bovine).